The sequence spans 775 residues: Isopimaradiene synthase (775 aa).

Residues 1 to 36 (MFSSSLKLKTNPLMDNKIHRSSSDRDFRGSTISSVK) constitute a chloroplast transit peptide. Mg(2+) contacts are provided by Asp525, Asp529, Asn669, Gln672, and Glu677. Positions 525-529 (DDFFD) match the DDXXD motif motif.

Belongs to the terpene synthase family. Mg(2+) is required as a cofactor. As to expression, ubiquitous expression in roots, stems, leaves and flowers.

The protein resides in the plastid. It is found in the chloroplast. The enzyme catalyses (+)-copalyl diphosphate = isopimara-8(14),15-diene + diphosphate. It participates in secondary metabolite biosynthesis; terpenoid biosynthesis. Its function is as follows. Involved in the biosynthesis of ent-kaurene diterpenoids natural products such as oridonin, miltiradiene, eriocalyxin B and nezukol, known to exhibit antitumor, anti-inflammatory and antibacterial activities. Catalyzes the conversion of (+)-copalyl diphosphate ((+)-CPP) to isopimaradiene. The chain is Isopimaradiene synthase from Isodon rubescens (Rabdosia rubescens).